The primary structure comprises 626 residues: Probable potassium transport system protein Kup 3 (626 aa).

The next 12 membrane-spanning stretches (helical) occupy residues 10–30 (LATL…TSPL), 51–71 (VLGI…LKYV), 107–127 (VLLG…TPAI), 141–161 (PAFK…LFIF), 173–193 (FGPV…AAIV), 216–236 (LLGF…EALY), 251–271 (WLGY…ALLL), 293–313 (LVAL…SGAF), 341–361 (IYLP…VIEF), 371–391 (YGIA…AVAV), 401–421 (AMLG…ANSV), and 423–443 (IADG…LLTT).

This sequence belongs to the HAK/KUP transporter (TC 2.A.72) family.

It localises to the cell inner membrane. The enzyme catalyses K(+)(in) + H(+)(in) = K(+)(out) + H(+)(out). Transport of potassium into the cell. Likely operates as a K(+):H(+) symporter. This is Probable potassium transport system protein Kup 3 from Dechloromonas aromatica (strain RCB).